The primary structure comprises 182 residues: Succinate dehydrogenase [ubiquinone] cytochrome b small subunit, mitochondrial (182 aa).

The Mitochondrial matrix segment spans residues methionine 1–serine 71. The chain crosses the membrane as a helical span at residues serine 72–isoleucine 96. Residues alanine 97–valine 101 lie on the Mitochondrial intermembrane side of the membrane. The chain crosses the membrane as a helical span at residues leucine 102–valine 122. Histidine 113 contributes to the heme binding site. Topologically, residues valine 123 to leucine 135 are mitochondrial matrix. A ubiquinone is bound at residue tyrosine 125. The chain crosses the membrane as a helical span at residues proline 136–phenylalanine 157. At isoleucine 158–alanine 182 the chain is on the mitochondrial intermembrane side.

The protein belongs to the CybS family. As to quaternary structure, forms part of complex II containing four subunits: a flavoprotein (FP), an iron-sulfur protein (IP) and a cytochrome b composed of a large and a small subunit.

The protein localises to the mitochondrion inner membrane. It functions in the pathway carbohydrate metabolism; tricarboxylic acid cycle. Functionally, membrane-anchoring subunit of succinate dehydrogenase (SDH) that is involved in complex II of the mitochondrial electron transport chain and is responsible for transferring electrons from succinate to ubiquinone (coenzyme Q). This chain is Succinate dehydrogenase [ubiquinone] cytochrome b small subunit, mitochondrial, found in Drosophila melanogaster (Fruit fly).